A 214-amino-acid polypeptide reads, in one-letter code: MSEEVPVIKLEDWKPRTKVGQLIKEGKINSMKELFERNLPIVEPEIVDVLLPKLRYDIVDIGIVQKQTDAGELSRYKVLIVMGNMDGYISYGTGKAKQLRVAIQKAIRDAKMRIIPVRRGCGSWECTCGESHSLPFIVSGKAGSVEVTLLPAPKGTGLVVGSVLKTFLSLAGLKDVWSRTKGSTYTHENFIKAAYIALYNTYRFVTPVDWGRMK.

Residues 54 to 117 form the S5 DRBM domain; sequence LRYDIVDIGI…RDAKMRIIPV (64 aa).

The protein belongs to the universal ribosomal protein uS5 family. Part of the 30S ribosomal subunit. Contacts protein S4.

In terms of biological role, with S4 and S12 plays an important role in translational accuracy. The chain is Small ribosomal subunit protein uS5 from Sulfolobus acidocaldarius (strain ATCC 33909 / DSM 639 / JCM 8929 / NBRC 15157 / NCIMB 11770).